Consider the following 331-residue polypeptide: uncharacterized protein (331 aa).

The protein belongs to the ornithine cyclodeaminase/mu-crystallin family.

This is an uncharacterized protein from Sinorhizobium fredii (strain NBRC 101917 / NGR234).